A 41-amino-acid chain; its full sequence is Hemoglobin subunit beta (41 aa).

The Globin domain occupies 1-41 (LGNVLVCVLAHHFGKEFTPQVQAAYQKVVAGVANALAHKYH). Residue Lys-39 is modified to N6-acetyllysine.

Belongs to the globin family. In terms of assembly, heterotetramer of two alpha chains and two beta chains. Red blood cells.

In terms of biological role, involved in oxygen transport from the lung to the various peripheral tissues. The sequence is that of Hemoglobin subunit beta (HBB) from Colobus guereza (Mantled guereza).